The chain runs to 167 residues: Crossover junction endodeoxyribonuclease RuvC (167 aa).

Residues Asp7, Glu67, and Asp139 contribute to the active site. Positions 7, 67, and 139 each coordinate Mg(2+).

This sequence belongs to the RuvC family. Homodimer which binds Holliday junction (HJ) DNA. The HJ becomes 2-fold symmetrical on binding to RuvC with unstacked arms; it has a different conformation from HJ DNA in complex with RuvA. In the full resolvosome a probable DNA-RuvA(4)-RuvB(12)-RuvC(2) complex forms which resolves the HJ. The cofactor is Mg(2+).

It is found in the cytoplasm. It catalyses the reaction Endonucleolytic cleavage at a junction such as a reciprocal single-stranded crossover between two homologous DNA duplexes (Holliday junction).. In terms of biological role, the RuvA-RuvB-RuvC complex processes Holliday junction (HJ) DNA during genetic recombination and DNA repair. Endonuclease that resolves HJ intermediates. Cleaves cruciform DNA by making single-stranded nicks across the HJ at symmetrical positions within the homologous arms, yielding a 5'-phosphate and a 3'-hydroxyl group; requires a central core of homology in the junction. The consensus cleavage sequence is 5'-(A/T)TT(C/G)-3'. Cleavage occurs on the 3'-side of the TT dinucleotide at the point of strand exchange. HJ branch migration catalyzed by RuvA-RuvB allows RuvC to scan DNA until it finds its consensus sequence, where it cleaves and resolves the cruciform DNA. The sequence is that of Crossover junction endodeoxyribonuclease RuvC from Zymomonas mobilis subsp. mobilis (strain ATCC 31821 / ZM4 / CP4).